We begin with the raw amino-acid sequence, 877 residues long: EF-hand domain-containing family member B (877 aa).

2 disordered regions span residues 1–47 (MCSF…GRKS) and 268–290 (AQQPEEQREAENTEPGVEPPDRI). EF-hand domains lie at 605 to 640 (QNFDTLLAAFRHYDKKGDGVIDRAELQEACDQACLH) and 641 to 676 (LDEKLLDQLFEYCDVDKDGLINYLEFANFLTWKDKT). Residues D618, D622, E629, D654, D656, D658, and E665 each coordinate Ca(2+).

As to quaternary structure, microtubule inner protein component of sperm flagellar doublet microtubules. Interacts with STIM1 and ORAI1; the interactions take place upon Ca(2+)-store depletion and dissociate through a Ca(2+)-dependent mechanism. Interaction with STIM1 inhibits STIM1 interaction with SARAF. Expressed in trachea multiciliated cells.

Its subcellular location is the cytoplasm. The protein resides in the cytoskeleton. It is found in the cilium axoneme. It localises to the flagellum axoneme. Its function is as follows. Microtubule inner protein (MIP) part of the dynein-decorated doublet microtubules (DMTs) in cilia axoneme, which is required for motile cilia beating. Cytosolic sensor for calcium, modulates the interaction of STIM1 and ORAI1 upon store depletion and the activation of store-operated Ca(2+) entry (SOCE) and NFAT translocation from cytosol to nucleus. The sequence is that of EF-hand domain-containing family member B from Bos taurus (Bovine).